Consider the following 931-residue polypeptide: Protein unc-45 homolog B (931 aa).

3 TPR repeats span residues A6–K39, A43–D76, and I77–N110. ARM repeat units follow at residues E169 to S208, R211 to D250, and D751 to L790.

In terms of assembly, interacts with HSP90 in an ATP-independent manner. Interacts with UBE4B; the interaction may target UNC45B for proteasomal degradation. Highly expressed in adult skeletal muscle and heart. Detected at intermediate levels in lung. Highly expressed in embryonic heart.

The protein localises to the cytoplasm. The protein resides in the myofibril. It is found in the sarcomere. It localises to the z line. Its subcellular location is the a band. The protein localises to the perinuclear region. The protein resides in the cytosol. Its function is as follows. Acts as a co-chaperone for HSP90 and is required for proper folding of the myosin motor domain. Plays a role in sarcomere formation during muscle cell development. Is necessary for normal early lens development. The polypeptide is Protein unc-45 homolog B (Unc45b) (Mus musculus (Mouse)).